Here is a 3413-residue protein sequence, read N- to C-terminus: Protein pecanex (3413 aa).

2 helical membrane-spanning segments follow: residues 33–53 (VVHL…YLYF) and 57–77 (WLTW…VKLA). The N-linked (GlcNAc...) asparagine glycan is linked to asparagine 164. The span at 182–195 (GSQQDQQSLAGSAS) shows a compositional bias: low complexity. Disordered regions lie at residues 182–213 (GSQQ…STSA) and 235–314 (GSSA…ENKL). Over residues 196–213 (VSKSIRSTGPGGNSSTSA) the composition is skewed to polar residues. Asparagine 208 carries N-linked (GlcNAc...) asparagine glycosylation. A compositionally biased stretch (low complexity) spans 302–312 (AAAAANSNAEN). Asparagine 317 carries an N-linked (GlcNAc...) asparagine glycan. 4 disordered regions span residues 327–363 (PSFL…GDAP), 379–403 (LVNP…RLKH), 540–609 (PGTG…GTGG), and 625–651 (PSVS…NPLP). Residues 330-354 (LHSQPTNKARGQTNPRQHFITSAPS) show a composition bias toward polar residues. Over residues 392 to 402 (RSSETHDERLK) the composition is skewed to basic and acidic residues. Residues 541–559 (GTGGSVTGGGGAAGGGGSA) are compositionally biased toward gly residues. N-linked (GlcNAc...) asparagine glycosylation is found at asparagine 569 and asparagine 581. Over residues 569-582 (NATSYKHGSSQSNK) the composition is skewed to polar residues. The span at 599 to 609 (GTSGGAGGTGG) shows a compositional bias: gly residues. Positions 625–634 (PSVSNLSPHP) are enriched in polar residues. Asparagine 685 carries an N-linked (GlcNAc...) asparagine glycan. Over residues 720–730 (EKTAHEEHGDD) the composition is skewed to basic and acidic residues. 4 disordered regions span residues 720–745 (EKTA…DDEV), 816–873 (HHHS…NRQP), 886–921 (RQEL…DCEQ), and 1002–1021 (KQTK…HSIS). The span at 816 to 826 (HHHSHLHHHKA) shows a compositional bias: basic residues. Low complexity predominate over residues 828-846 (SVEGAGPSGGSVAVGVSAG). Acidic residues predominate over residues 847–856 (NDDEDEETED). N-linked (GlcNAc...) asparagine glycosylation is present at asparagine 857. Positions 1008–1021 (SRNSSSSNSTHSIS) are enriched in low complexity. Asparagine 1010, asparagine 1015, asparagine 1069, and asparagine 1199 each carry an N-linked (GlcNAc...) asparagine glycan. The next 2 membrane-spanning stretches (helical) occupy residues 1315-1335 (MHVL…AAIL) and 1343-1363 (LCAL…VKSV). An N-linked (GlcNAc...) asparagine glycan is attached at asparagine 1375. 4 consecutive transmembrane segments (helical) span residues 1376 to 1396 (KTVA…LLLL), 1423 to 1443 (VVAL…IIFS), 1474 to 1494 (LLGS…LYGP), and 1504 to 1524 (GTQY…GYHL). Asparagine 1572 carries N-linked (GlcNAc...) asparagine glycosylation. 3 disordered regions span residues 1577–1675 (QLTT…TGEP), 1722–1744 (DKIS…GAGT), and 1760–1813 (AEAE…LPDP). Composition is skewed to basic and acidic residues over residues 1587–1598 (RQTDVKTEHEQI) and 1607–1620 (TVNE…HGAD). Over residues 1639–1666 (KTSSLGSSQQTLGKTISSSKRAITASSS) the composition is skewed to low complexity. Over residues 1725 to 1738 (SSSSATNPGDMSTL) the composition is skewed to polar residues. Repeat copies occupy residues 1776-1777 (GT), 1778-1779 (GT), 1780-1781 (GT), 1782-1783 (GT), and 1784-1785 (GT). The 5 X 2 AA tandem repeats of G-T stretch occupies residues 1776–1785 (GTGTGTGTGT). 2 N-linked (GlcNAc...) asparagine glycosylation sites follow: asparagine 1791 and asparagine 1804. Over residues 1799–1808 (GNTNSNGTGN) the composition is skewed to low complexity. A run of 5 helical transmembrane segments spans residues 1830–1850 (LVVM…TVFT), 1856–1876 (LNVV…YIVP), 1914–1934 (LYIY…AISS), 1940–1960 (QLIV…ICAL), and 1976–1996 (IIIF…ETFI). The disordered stretch occupies residues 2344 to 2463 (SMGGAPPAQA…HSFANISRQT (120 aa)). Residues 2346–2370 (GGAPPAQAPAAAGGASSAPATAGVA) are compositionally biased toward low complexity. Asparagine 2380 and asparagine 2387 each carry an N-linked (GlcNAc...) asparagine glycan. Positions 2389–2411 (SAHGGQAGPSSGQSKSQSQQQLR) are enriched in low complexity. The segment covering 2437-2447 (GTGGVTGGGGD) has biased composition (gly residues). Residues 2449-2463 (QLSSSHSFANISRQT) are compositionally biased toward polar residues. N-linked (GlcNAc...) asparagine glycosylation is found at asparagine 2458, asparagine 2619, and asparagine 2717. 2 disordered regions span residues 2908 to 2997 (LNRE…SSGS) and 3198 to 3242 (ESST…GDDG). Over residues 2940-2956 (RRPEVGSSRGRDHERRA) the composition is skewed to basic and acidic residues. Asparagine 3246 carries an N-linked (GlcNAc...) asparagine glycan. Residues 3295 to 3413 (AEESKEKGTA…NGESEAGTTV (119 aa)) are disordered. Residues 3310–3323 (EGEEGVGEMEIEPE) are compositionally biased toward acidic residues. The segment covering 3364–3377 (TSSTSSAKSTSSPS) has biased composition (low complexity). A compositionally biased stretch (acidic residues) spans 3380–3406 (QEEEDAVDPEETPELASEESPSDENGE).

Belongs to the pecanex family.

It localises to the membrane. Involved in neurogenesis. This chain is Protein pecanex (pcx), found in Drosophila melanogaster (Fruit fly).